Here is a 610-residue protein sequence, read N- to C-terminus: Isocitrate dehydrogenase kinase/phosphatase (610 aa).

Residues 359–365 and lysine 380 each bind ATP; that span reads APGFKGT. Aspartate 419 is an active-site residue.

This sequence belongs to the AceK family.

The protein resides in the cytoplasm. The catalysed reaction is L-seryl-[isocitrate dehydrogenase] + ATP = O-phospho-L-seryl-[isocitrate dehydrogenase] + ADP + H(+). In terms of biological role, bifunctional enzyme which can phosphorylate or dephosphorylate isocitrate dehydrogenase (IDH) on a specific serine residue. This is a regulatory mechanism which enables bacteria to bypass the Krebs cycle via the glyoxylate shunt in response to the source of carbon. When bacteria are grown on glucose, IDH is fully active and unphosphorylated, but when grown on acetate or ethanol, the activity of IDH declines drastically concomitant with its phosphorylation. This is Isocitrate dehydrogenase kinase/phosphatase from Rhodopseudomonas palustris (strain TIE-1).